The primary structure comprises 221 residues: Phosphoribosylformylglycinamidine synthase subunit PurQ (221 aa).

The 217-residue stretch at 5–221 (TVGIVVFPGS…LYTLRSLITQ (217 aa)) folds into the Glutamine amidotransferase type-1 domain. Cys-89 (nucleophile) is an active-site residue. Catalysis depends on residues His-197 and Glu-199.

Part of the FGAM synthase complex composed of 1 PurL, 1 PurQ and 2 PurS subunits.

It localises to the cytoplasm. The enzyme catalyses N(2)-formyl-N(1)-(5-phospho-beta-D-ribosyl)glycinamide + L-glutamine + ATP + H2O = 2-formamido-N(1)-(5-O-phospho-beta-D-ribosyl)acetamidine + L-glutamate + ADP + phosphate + H(+). It catalyses the reaction L-glutamine + H2O = L-glutamate + NH4(+). The protein operates within purine metabolism; IMP biosynthesis via de novo pathway; 5-amino-1-(5-phospho-D-ribosyl)imidazole from N(2)-formyl-N(1)-(5-phospho-D-ribosyl)glycinamide: step 1/2. Functionally, part of the phosphoribosylformylglycinamidine synthase complex involved in the purines biosynthetic pathway. Catalyzes the ATP-dependent conversion of formylglycinamide ribonucleotide (FGAR) and glutamine to yield formylglycinamidine ribonucleotide (FGAM) and glutamate. The FGAM synthase complex is composed of three subunits. PurQ produces an ammonia molecule by converting glutamine to glutamate. PurL transfers the ammonia molecule to FGAR to form FGAM in an ATP-dependent manner. PurS interacts with PurQ and PurL and is thought to assist in the transfer of the ammonia molecule from PurQ to PurL. The chain is Phosphoribosylformylglycinamidine synthase subunit PurQ from Prochlorococcus marinus subsp. pastoris (strain CCMP1986 / NIES-2087 / MED4).